The following is a 791-amino-acid chain: uncharacterized protein (791 aa).

A helical membrane pass occupies residues 10 to 30 (LLTITIGAVAVSSILLGGIFY). Basic and acidic residues predominate over residues 56-76 (NLDYQKARPSIKDNNLKEIPK). Positions 56–175 (NLDYQKARPS…PQPQQIPNQS (120 aa)) are disordered. The span at 77 to 97 (PKPQPKPEPQPTPFPDPIPTP) shows a compositional bias: pro residues. Residues 98–124 (PKKEELKKPEIKPEEPKKPEIKPEPIP) are compositionally biased toward basic and acidic residues. Pro residues predominate over residues 125 to 139 (KPKPQPIPQPTPPVE).

It to U.parvum UU044.

Its subcellular location is the membrane. This is an uncharacterized protein from Ureaplasma parvum serovar 3 (strain ATCC 700970).